Consider the following 388-residue polypeptide: Acyl-CoA dehydrogenase fadE12 (388 aa).

The protein belongs to the acyl-CoA dehydrogenase family. Requires FAD as cofactor.

It carries out the reaction a 2,3-saturated acyl-CoA + A = a 2,3-dehydroacyl-CoA + AH2. This Mycobacterium tuberculosis (strain CDC 1551 / Oshkosh) protein is Acyl-CoA dehydrogenase fadE12 (fadE12).